Reading from the N-terminus, the 72-residue chain is Alpha-elapitoxin-Dpp2d (72 aa).

5 cysteine pairs are disulfide-bonded: Cys3/Cys21, Cys14/Cys42, Cys27/Cys31, Cys46/Cys57, and Cys58/Cys63. At Arg72 the chain carries Arginine amide.

This sequence belongs to the three-finger toxin family. Long-chain subfamily. Type II alpha-neurotoxin sub-subfamily. In terms of assembly, monomer (predominant). Post-translationally, amidation does not significantly affect toxin selectivity, since the activity profile and binding data are reminiscent of classical long-chain 3-finger toxins with a free carboxyl termini. In terms of tissue distribution, expressed by the venom gland.

It is found in the secreted. Functionally, binds with high affinity to muscular (IC(50)=114 nM) and neuronal (alpha-7/CHRNA7) (IC(50)=58 nM) nicotinic acetylcholine receptor (nAChR) and inhibits acetylcholine from binding to the receptor, thereby impairing neuromuscular and neuronal transmission. Competitive radioligand binding assays also demonstrate that this toxin competes with epibatidine binding to the Lymnaea stagnalis acetylcholine-binding protein (Ls-AChBP) (IC(50)=4.9 nM). This chain is Alpha-elapitoxin-Dpp2d, found in Dendroaspis polylepis polylepis (Black mamba).